We begin with the raw amino-acid sequence, 238 residues long: tRNA (guanine-N(7)-)-methyltransferase (238 aa).

The S-adenosyl-L-methionine site is built by Glu-68, Glu-93, Asp-121, and Asp-143. Asp-143 is an active-site residue. Substrate contacts are provided by residues Lys-147, Asp-179, and 216–219 (TRYE).

This sequence belongs to the class I-like SAM-binding methyltransferase superfamily. TrmB family.

It catalyses the reaction guanosine(46) in tRNA + S-adenosyl-L-methionine = N(7)-methylguanosine(46) in tRNA + S-adenosyl-L-homocysteine. The protein operates within tRNA modification; N(7)-methylguanine-tRNA biosynthesis. Functionally, catalyzes the formation of N(7)-methylguanine at position 46 (m7G46) in tRNA. The polypeptide is tRNA (guanine-N(7)-)-methyltransferase (Paramagnetospirillum magneticum (strain ATCC 700264 / AMB-1) (Magnetospirillum magneticum)).